Here is a 400-residue protein sequence, read N- to C-terminus: MDAWRGMPRWGLLLLLWGSCTFGLPTETTTFKRISLKRMPSIRESLKERGVDMARLGPERMALVNITSSVILTNYMDTQYYGEIGIGTPPQTFKVVFDTGSSNVWVPSSKCSRLYTACVYHKLFDASDSSSYKHNGTELTLRYSTGTVSGFLSQDVITVGGITVTQTFGEVTEMPALPFMLAEFDGVVGMGFSEQAIGKVTPLFDNIISQGLLKEDVFSFYYNRDSENSQSLGGQIVLGGSDPQHYEGNFHYINLIRTGLWQIPMKGVSVGSSTLLCEDGCLALVDTGASYISGSTSSIEKLMEALGAKKRLFDYVVKCNEGPTLPDISFHLGGKEYTLTSADYVFQESYSSKKLCTLAIHAMDIPPPTGPTWALGATFIRKFYTEFDRGNNRIGFALAR.

The N-terminal stretch at 1 to 23 (MDAWRGMPRWGLLLLLWGSCTFG) is a signal peptide. Positions 24–60 (LPTETTTFKRISLKRMPSIRESLKERGVDMARLGPER) are cleaved as a propeptide — activation peptide. An N-linked (GlcNAc...) asparagine glycan is attached at Asn-65. The Peptidase A1 domain occupies 80-397 (YYGEIGIGTP…DRGNNRIGFA (318 aa)). Asp-98 is an active-site residue. A disulfide bridge links Cys-111 with Cys-118. N-linked (GlcNAc...) asparagine glycosylation occurs at Asn-135. Cys-277 and Cys-281 are joined by a disulfide. The active site involves Asp-286. A disulfide bond links Cys-319 and Cys-356.

The protein belongs to the peptidase A1 family. As to quaternary structure, interacts with ATP6AP2.

It localises to the secreted. The protein resides in the membrane. The enzyme catalyses Cleavage of Leu-|-Xaa bond in angiotensinogen to generate angiotensin I.. With respect to regulation, interaction with ATP6AP2 results in a 5-fold increased efficiency in angiotensinogen processing. Renin is a highly specific endopeptidase, whose only known function is to generate angiotensin I from angiotensinogen in the plasma, initiating a cascade of reactions that produce an elevation of blood pressure and increased sodium retention by the kidney. The sequence is that of Renin (REN) from Callithrix jacchus (White-tufted-ear marmoset).